The chain runs to 56 residues: Putative zinc-binding protein YnfU (56 aa).

Residues Cys19, Cys22, Cys41, and Cys44 each contribute to the Zn(2+) site.

Requires Zn(2+) as cofactor.

In Escherichia coli (strain K12), this protein is Putative zinc-binding protein YnfU.